A 145-amino-acid chain; its full sequence is UI (145 aa).

Residues 1–22 (MKPVPLVLLITSVLLTTHIPLS) form the signal peptide. Valine 143 is modified (valine amide).

This sequence belongs to the sauvagine/corticotropin-releasing factor/urotensin I family.

It localises to the secreted. Functionally, urotensin is found in the teleost caudal neurosecretory system. It has a suggested role in osmoregulation and as a corticotropin-releasing factor. The non-hormonal portion of this precursor may be a urotensin binding protein, urophysin. The sequence is that of UI from Carassius auratus (Goldfish).